A 203-amino-acid chain; its full sequence is Chemotactic transduction protein ChpE (203 aa).

The next 5 helical transmembrane spans lie at 3 to 23, 46 to 66, 69 to 89, 123 to 143, and 149 to 169; these read AIFL…GAVF, LIGD…LLGY, VRIP…VQGL, NVVY…GTPN, and VFFA…AALV.

The protein belongs to the Rht family.

The protein localises to the cell membrane. This chain is Chemotactic transduction protein ChpE (chpE), found in Pseudomonas aeruginosa (strain ATCC 15692 / DSM 22644 / CIP 104116 / JCM 14847 / LMG 12228 / 1C / PRS 101 / PAO1).